We begin with the raw amino-acid sequence, 182 residues long: Peptidyl-prolyl cis-trans isomerase ssp-1 (182 aa).

The WW domain maps to 7–41 (TGLPEDWEVRHSQSKNLPYYFNSATKTSRWEPPSG). One can recognise a PpiC domain in the interval 71 to 182 (QGKIRCAHLL…SGLHLIERLE (112 aa)).

It catalyses the reaction [protein]-peptidylproline (omega=180) = [protein]-peptidylproline (omega=0). Site-specific PPIase with respect to the amino acid N-terminal to the proline residue. Peptides with glutamate, phosphoserine, or phosphothreonine in the -1 position are the best substrates. It is not only able to isomerize small peptides but is also active in protein folding. The chain is Peptidyl-prolyl cis-trans isomerase ssp-1 (ssp-1) from Neurospora crassa (strain ATCC 24698 / 74-OR23-1A / CBS 708.71 / DSM 1257 / FGSC 987).